Consider the following 502-residue polypeptide: ATP synthase subunit alpha (502 aa).

Position 169–176 (169–176 (GDRQTGKT)) interacts with ATP.

This sequence belongs to the ATPase alpha/beta chains family. In terms of assembly, F-type ATPases have 2 components, CF(1) - the catalytic core - and CF(0) - the membrane proton channel. CF(1) has five subunits: alpha(3), beta(3), gamma(1), delta(1), epsilon(1). CF(0) has three main subunits: a(1), b(2) and c(9-12). The alpha and beta chains form an alternating ring which encloses part of the gamma chain. CF(1) is attached to CF(0) by a central stalk formed by the gamma and epsilon chains, while a peripheral stalk is formed by the delta and b chains.

It localises to the cell inner membrane. The catalysed reaction is ATP + H2O + 4 H(+)(in) = ADP + phosphate + 5 H(+)(out). Its function is as follows. Produces ATP from ADP in the presence of a proton gradient across the membrane. The alpha chain is a regulatory subunit. In Geotalea daltonii (strain DSM 22248 / JCM 15807 / FRC-32) (Geobacter daltonii), this protein is ATP synthase subunit alpha.